The sequence spans 374 residues: Glutamate 5-kinase (374 aa).

Lys-16 contacts ATP. Residues Ser-56, Asp-143, and Asn-155 each coordinate substrate. Residue 175-176 participates in ATP binding; sequence TD. Positions 282-360 constitute a PUA domain; the sequence is KGCFVVDEGA…TRIEEILGYV (79 aa).

The protein belongs to the glutamate 5-kinase family.

It localises to the cytoplasm. The enzyme catalyses L-glutamate + ATP = L-glutamyl 5-phosphate + ADP. Its pathway is amino-acid biosynthesis; L-proline biosynthesis; L-glutamate 5-semialdehyde from L-glutamate: step 1/2. Functionally, catalyzes the transfer of a phosphate group to glutamate to form L-glutamate 5-phosphate. This is Glutamate 5-kinase from Methylococcus capsulatus (strain ATCC 33009 / NCIMB 11132 / Bath).